A 154-amino-acid polypeptide reads, in one-letter code: Endoribonuclease YbeY (154 aa).

Zn(2+) is bound by residues His-113, His-117, and His-123.

The protein belongs to the endoribonuclease YbeY family. Zn(2+) is required as a cofactor.

The protein resides in the cytoplasm. Functionally, single strand-specific metallo-endoribonuclease involved in late-stage 70S ribosome quality control and in maturation of the 3' terminus of the 16S rRNA. This Anaplasma marginale (strain Florida) protein is Endoribonuclease YbeY.